Consider the following 442-residue polypeptide: D-serine dehydratase (442 aa).

At Lys-118 the chain carries N6-(pyridoxal phosphate)lysine.

The protein belongs to the serine/threonine dehydratase family. DsdA subfamily. As to quaternary structure, monomer. Requires pyridoxal 5'-phosphate as cofactor.

It carries out the reaction D-serine = pyruvate + NH4(+). The protein is D-serine dehydratase of Citrobacter koseri (strain ATCC BAA-895 / CDC 4225-83 / SGSC4696).